A 247-amino-acid chain; its full sequence is MSIQIEVCIDNLESLHNAITGGADRIELCSSLALGGLTPSFGFMKKAAEISPIPVYAMIRPRQGDFLYDNDDIAAMISDIQAAKLAGLQGVVFGVLKANGDIDMPLSARLMKIANDNDLGVTFHRAIDQCSNYKKAIENIAELGCERILTSGLAANAYDGINVLADMVKLANGRFDILAGAGVTAENAKEIIEKTGVKEVHLSGKSTRPSKMKLILDGVKMGAGDLDDFIVPVTDAKKIDAVKQRIK.

This sequence belongs to the CutC family.

It is found in the cytoplasm. In Aliivibrio fischeri (strain MJ11) (Vibrio fischeri), this protein is PF03932 family protein CutC.